Consider the following 164-residue polypeptide: FMN reductase (NADH) RutF (164 aa).

This sequence belongs to the non-flavoprotein flavin reductase family. RutF subfamily.

It catalyses the reaction FMNH2 + NAD(+) = FMN + NADH + 2 H(+). Its function is as follows. Catalyzes the reduction of FMN to FMNH2 which is used to reduce pyrimidine by RutA via the Rut pathway. This Enterobacter cloacae subsp. cloacae (strain ATCC 13047 / DSM 30054 / NBRC 13535 / NCTC 10005 / WDCM 00083 / NCDC 279-56) protein is FMN reductase (NADH) RutF.